A 184-amino-acid chain; its full sequence is Large ribosomal subunit protein bL9 (184 aa).

A disordered region spans residues 160 to 184; that stretch reads LQNQKSEQQEAEQDANKEATDGDDS. Over residues 173–184 the composition is skewed to basic and acidic residues; it reads DANKEATDGDDS.

This sequence belongs to the bacterial ribosomal protein bL9 family.

Its function is as follows. Binds to the 23S rRNA. The protein is Large ribosomal subunit protein bL9 of Wolbachia pipientis wMel.